Reading from the N-terminus, the 108-residue chain is Large ribosomal subunit protein bL21c (108 aa).

The protein belongs to the bacterial ribosomal protein bL21 family. As to quaternary structure, part of the 50S ribosomal subunit.

The protein localises to the plastid. The protein resides in the chloroplast. Functionally, this protein binds to 23S rRNA. This chain is Large ribosomal subunit protein bL21c, found in Cyanidium caldarium (Red alga).